A 141-amino-acid polypeptide reads, in one-letter code: Nucleoside diphosphate kinase (141 aa).

The ATP site is built by Lys11, Phe59, Arg87, Thr93, Arg104, and Asn114. His117 acts as the Pros-phosphohistidine intermediate in catalysis.

It belongs to the NDK family. Homotetramer. Mg(2+) serves as cofactor.

Its subcellular location is the cytoplasm. It carries out the reaction a 2'-deoxyribonucleoside 5'-diphosphate + ATP = a 2'-deoxyribonucleoside 5'-triphosphate + ADP. The catalysed reaction is a ribonucleoside 5'-diphosphate + ATP = a ribonucleoside 5'-triphosphate + ADP. In terms of biological role, major role in the synthesis of nucleoside triphosphates other than ATP. The ATP gamma phosphate is transferred to the NDP beta phosphate via a ping-pong mechanism, using a phosphorylated active-site intermediate. The chain is Nucleoside diphosphate kinase from Haemophilus influenzae (strain 86-028NP).